A 719-amino-acid chain; its full sequence is Penicillin-binding protein 1A (719 aa).

Residues 62 to 223 form a transglycosylase region; sequence LIADLGSERR…NQYDPYSHPE (162 aa). Glutamate 91 serves as the catalytic Proton donor; for transglycosylase activity. The tract at residues 297 to 611 is transpeptidase; it reads DVYTNVDQEA…RLTPLVGNGL (315 aa). The active-site Acyl-ester intermediate; for transpeptidase activity is serine 370. The segment at 652-719 is disordered; sequence ARSTWSSPAP…QNQNPQPAQP (68 aa). The span at 654–719 shows a compositional bias: low complexity; that stretch reads STWSSPAPQQ…QNQNPQPAQP (66 aa).

In the N-terminal section; belongs to the glycosyltransferase 51 family. It in the C-terminal section; belongs to the transpeptidase family. Interacts with MreC in the elongasome.

It is found in the secreted. It catalyses the reaction [GlcNAc-(1-&gt;4)-Mur2Ac(oyl-L-Ala-gamma-D-Glu-L-Lys-D-Ala-D-Ala)](n)-di-trans,octa-cis-undecaprenyl diphosphate + beta-D-GlcNAc-(1-&gt;4)-Mur2Ac(oyl-L-Ala-gamma-D-Glu-L-Lys-D-Ala-D-Ala)-di-trans,octa-cis-undecaprenyl diphosphate = [GlcNAc-(1-&gt;4)-Mur2Ac(oyl-L-Ala-gamma-D-Glu-L-Lys-D-Ala-D-Ala)](n+1)-di-trans,octa-cis-undecaprenyl diphosphate + di-trans,octa-cis-undecaprenyl diphosphate + H(+). The enzyme catalyses Preferential cleavage: (Ac)2-L-Lys-D-Ala-|-D-Ala. Also transpeptidation of peptidyl-alanyl moieties that are N-acyl substituents of D-alanine.. It functions in the pathway cell wall biogenesis; peptidoglycan biosynthesis. Cell wall formation. The polypeptide is Penicillin-binding protein 1A (pbpA) (Streptococcus pneumoniae (strain ATCC BAA-255 / R6)).